We begin with the raw amino-acid sequence, 77 residues long: Translation initiation factor IF-1, chloroplastic (77 aa).

In terms of domain architecture, S1-like spans 1-71 (MKEQKWVHEG…TRGRIIYRLR (71 aa)).

This sequence belongs to the IF-1 family. In terms of assembly, component of the 30S ribosomal translation pre-initiation complex which assembles on the 30S ribosome in the order IF-2 and IF-3, IF-1 and N-formylmethionyl-tRNA(fMet); mRNA recruitment can occur at any time during PIC assembly.

It is found in the plastid. The protein localises to the chloroplast. One of the essential components for the initiation of protein synthesis. Stabilizes the binding of IF-2 and IF-3 on the 30S subunit to which N-formylmethionyl-tRNA(fMet) subsequently binds. Helps modulate mRNA selection, yielding the 30S pre-initiation complex (PIC). Upon addition of the 50S ribosomal subunit IF-1, IF-2 and IF-3 are released leaving the mature 70S translation initiation complex. This is Translation initiation factor IF-1, chloroplastic from Cercidiphyllum japonicum (Katsura tree).